The following is a 389-amino-acid chain: Succinate--CoA ligase [ADP-forming] subunit beta (389 aa).

The ATP-grasp domain maps to 9–244 (KQLFEHYGLP…LTQNDAREAE (236 aa)). ATP-binding positions include Lys46, 53–55 (GRG), Glu99, Cys102, and Glu107. Residues Asn199 and Asp213 each coordinate Mg(2+). Residues Asn264 and 321–323 (GIV) each bind substrate.

The protein belongs to the succinate/malate CoA ligase beta subunit family. In terms of assembly, heterotetramer of two alpha and two beta subunits. Requires Mg(2+) as cofactor.

The catalysed reaction is succinate + ATP + CoA = succinyl-CoA + ADP + phosphate. It catalyses the reaction GTP + succinate + CoA = succinyl-CoA + GDP + phosphate. It functions in the pathway carbohydrate metabolism; tricarboxylic acid cycle; succinate from succinyl-CoA (ligase route): step 1/1. Functionally, succinyl-CoA synthetase functions in the citric acid cycle (TCA), coupling the hydrolysis of succinyl-CoA to the synthesis of either ATP or GTP and thus represents the only step of substrate-level phosphorylation in the TCA. The beta subunit provides nucleotide specificity of the enzyme and binds the substrate succinate, while the binding sites for coenzyme A and phosphate are found in the alpha subunit. The protein is Succinate--CoA ligase [ADP-forming] subunit beta of Haemophilus influenzae (strain ATCC 51907 / DSM 11121 / KW20 / Rd).